The following is a 312-amino-acid chain: Eukaryotic translation initiation factor 2 subunit 2 (312 aa).

2 disordered regions span residues 26-104 and 125-146; these read AALG…NLDM and ADQADDDKSEDKENDEDNSSTW. Serine 44 carries the phosphoserine modification. Acidic residues-rich tracts occupy residues 90-102 and 125-142; these read AASEEPEEEEINL and ADQADDDKSEDKENDEDN. Serine 133 bears the Phosphoserine mark. Threonine 145 bears the Phosphothreonine mark. A C4-type zinc finger spans residues 260–284; that stretch reads CHTCRSPETILQKDTRLFFLQCESC.

Belongs to the eIF-2-beta/eIF-5 family. Eukaryotic translation initiation factor 2 eIF2 is a heterotrimeric complex composed of an alpha, a beta and a gamma subunit.

The protein resides in the cytoplasm. It localises to the cytosol. Its function is as follows. Component of the eIF2 complex that functions in the early steps of protein synthesis by forming a ternary complex with GTP and initiator tRNA. This complex binds to a 40S ribosomal subunit, followed by mRNA binding to form a 43S pre-initiation complex (43S PIC). Junction of the 60S ribosomal subunit to form the 80S initiation complex is preceded by hydrolysis of the GTP bound to eIF2 and release of an eIF2-GDP binary complex. In order for eIF2 to recycle and catalyze another round of initiation, the GDP bound to eIF2 must exchange with GTP by way of a reaction catalyzed by eIF2B. This Drosophila melanogaster (Fruit fly) protein is Eukaryotic translation initiation factor 2 subunit 2.